Consider the following 1531-residue polypeptide: Lysophospholipase nte1 (1531 aa).

Topologically, residues 1–72 are cytoplasmic; the sequence is MATGDGIIAA…TPPAPSTMVG (72 aa). The chain crosses the membrane as a helical span at residues 73 to 93; that stretch reads WIGWIFSFIFQVIPSVLYWIV. At 94–115 the chain is on the lumenal side; it reads TFTTITLPTWLFTLFSMSLTFT. Residues 116-136 traverse the membrane as a helical segment; sequence MNFTTLLLIALAVVSTISWFI. The Cytoplasmic segment spans residues 137–1531; the sequence is RYRFLNMYSR…RTLAPRRASI (1395 aa). Disordered stretches follow at residues 242-265, 303-385, and 766-789; these read GSDE…PDGR, ASSA…TRRK, and NTSS…KQSR. The segment covering 325 to 343 has biased composition (basic and acidic residues); that stretch reads REMDDSPHVYQGDRLDPAS. A nucleoside 3',5'-cyclic phosphate contacts are provided by residues 689-809 and 849-969; these read GGTS…AVAS and RLTS…IAQR. Positions 768–779 are enriched in low complexity; the sequence is SSSRVSGSAAAA. The PNPLA domain maps to 1228–1392; that stretch reads LVLGGGGARG…IDNLTVDHMK (165 aa). The short motif at 1232–1237 is the GXGXXG element; sequence GGGARG. The GXSXG motif lies at 1259–1263; it reads GTSIG. The active-site Nucleophile is serine 1261. Aspartate 1379 functions as the Proton acceptor in the catalytic mechanism. Positions 1379–1381 match the DGA/G motif; that stretch reads DGG. Positions 1510–1531 are disordered; it reads LPEETEEKKKLQRTLAPRRASI.

This sequence belongs to the NTE family.

It localises to the endoplasmic reticulum membrane. It carries out the reaction a 1-acyl-sn-glycero-3-phosphocholine + H2O = sn-glycerol 3-phosphocholine + a fatty acid + H(+). Inhibited by organophosphorus esters. Its function is as follows. Intracellular phospholipase B that catalyzes the double deacylation of phosphatidylcholine (PC) to glycerophosphocholine (GroPCho). Plays an important role in membrane lipid homeostasis. Responsible for the rapid PC turnover in response to inositol, elevated temperatures, or when choline is present in the growth medium. The chain is Lysophospholipase nte1 (nte1) from Aspergillus niger (strain ATCC MYA-4892 / CBS 513.88 / FGSC A1513).